The sequence spans 139 residues: MKVLRLGFTDKYIEKQEPIDVVFDKYQPLGYVAVVELPSRIPWIIEIQRREWIERFITMPRDIFRELSFDIIILRRKLEPTPQYRMIRDIVSDLRQSRGYASGMVILPNGLTYDGDLLEGIEVMEGVDVIAYTLGLIDF.

The protein localises to the virion. The sequence is that of Coat protein TP2 from Thermoproteus tenax virus 1 (strain KRA1) (TTV1).